We begin with the raw amino-acid sequence, 170 residues long: MSNPEEITEVVEVAADEYVSVEEPEVAEDIEAAAAPQAPIVIDRPIQTVGRRKEAVVRVRLTPGSGDFKLNGRTIEDYFPNKVHQQLIKAPLVTVERAESFDIVALLHGGGPSGQAGALRLAIARALIEVTPEDRPALKSAGFLTRDARAVERKKYGLKKARKASQYSKR.

It belongs to the universal ribosomal protein uS9 family.

The chain is Small ribosomal subunit protein uS9 from Rhodococcus opacus (strain B4).